A 340-amino-acid chain; its full sequence is MSFENAVIGATASSLANIAVYPLDLAKTLVQTQLKDEFVEAGEEAGEERAGSRRQNRIKPIALRSPQAAEQYKGALDALQRIYGAEGVAGLYRGLGSSTVAGFIQSFSYFFWYTLVRKHYFRLKQARGGDARFSTPEELVLGIVAAATSQLFVNPINVVATRQQTRGQAAGAADMRTVAREVHAENGWRGFWAGLKVSLVLTVNPSITYATYERLREALFPTPAAASHLVDSAALLSPGQNFVMGVLSKIVSTVLTQPLIIAKASLQRSGSCFQDFHQVLHHLYSTEGPLSLWKGLGPQITKGVLVQGLLFMFKGELTKMLRKLMFYLALLRSSRRALKG.

3 Solcar repeats span residues 4–119 (ENAV…VRKH), 133–218 (FSTP…LREA), and 236–320 (LSPG…LTKM). 6 helical membrane passes run 6–26 (AVIG…LDLA), 96–116 (GSST…YTLV), 139–159 (LVLG…INVV), 190–210 (GFWA…ITYA), 242–262 (FVMG…LIIA), and 293–313 (WKGL…LFMF).

This sequence belongs to the mitochondrial carrier (TC 2.A.29) family.

The protein localises to the peroxisome membrane. Adenine nucleotide transporter involved in the uniport of ATP and adenine nucleotide hetero-exchange transport between the cytosol and the peroxisomal lumen. This transport is accompanied by a proton transport from the peroxisomal lumen to the cytosol. Transport of ATP into the peroxisome is required for beta-oxidation of medium-chain fatty acids. The sequence is that of Peroxisomal adenine nucleotide transporter 1 (ANT1) from Eremothecium gossypii (strain ATCC 10895 / CBS 109.51 / FGSC 9923 / NRRL Y-1056) (Yeast).